Here is a 98-residue protein sequence, read N- to C-terminus: Small ribosomal subunit protein uS19c (98 aa).

The protein belongs to the universal ribosomal protein uS19 family.

It is found in the plastid. It localises to the chloroplast. In terms of biological role, protein S19 forms a complex with S13 that binds strongly to the 16S ribosomal RNA. The sequence is that of Small ribosomal subunit protein uS19c from Jasminum nudiflorum (Winter jasmine).